The following is a 263-amino-acid chain: Rhomboid-like protease 3 (263 aa).

Helical transmembrane passes span 37–57, 86–106, 121–141, 142–162, 189–209, and 231–251; these read KSIV…CVLS, VVTP…LVFI, KFLV…MLMQ, PWAL…GMAA, LIYF…GGFL, and VLFY…PPLL. Residue Ser150 is the Nucleophile of the active site. His204 is a catalytic residue.

Belongs to the peptidase S54 family.

The protein localises to the membrane. The catalysed reaction is Cleaves type-1 transmembrane domains using a catalytic dyad composed of serine and histidine that are contributed by different transmembrane domains.. In terms of biological role, serine protease involved in intramembrane proteolysis and the subsequent release of polypeptides from their membrane anchors. This Toxoplasma gondii protein is Rhomboid-like protease 3 (ROM3).